Here is a 374-residue protein sequence, read N- to C-terminus: UPF0754 membrane protein SAB1779c (374 aa).

2 helical membrane passes run 4–24 and 354–374; these read LFIIIFMIVVGAIIGGITNVI and SLGFILGGIIGFFQGLVAIFV.

This sequence belongs to the UPF0754 family.

The protein resides in the cell membrane. The polypeptide is UPF0754 membrane protein SAB1779c (Staphylococcus aureus (strain bovine RF122 / ET3-1)).